The primary structure comprises 803 residues: Mechanosensitive cation channel TMEM63A (803 aa).

Residues 1–51 (MTDSPFLELWQSRTVAIRERLGIGDQPNDSYCYNSAKNSTVLQGVTFGGIP) are Extracellular-facing. A helical membrane pass occupies residues 52–74 (TVLFIDVSCFLFLIVVFSIIRRK). Topologically, residues 75–133 (FWDYGRIALVSEGNSESRFRRLSSSSSGQQDFESELGCCSWLTAIFRLHDDQILEWCGE) are cytoplasmic. Residues 134-166 (DAIHYLSFQRHIIFLLVVVSCLSLCIILPVNLS) traverse the membrane as a helical segment. Residues 167–190 (GDLLDKDPYSFGRTTIANLQTDNN) lie on the Extracellular side of the membrane. The helical transmembrane segment at 191 to 216 (LLWLHTIFAILYLILTVVFMRHHTQS) threads the bilayer. Residues 217–415 (IKYKEESLVR…CWKNLSIQGF (199 aa)) are Cytoplasmic-facing. Residues 218–413 (KYKEESLVRR…DICWKNLSIQ (196 aa)) are intracellular linker IL2; confers mechanosensitivity. The chain crosses the membrane as a helical span at residues 416-443 (RWWFQWLGINFILFVGLFFLTTPSIILS). Residues 444–461 (TMDKFNVTKPIHALNDPI) are Extracellular-facing. The helical transmembrane segment at 462–489 (ISQFFPTLLLWSFSALLPTIVCYSTLLE) threads the bilayer. Over 490–494 (SHWTK) the chain is Cytoplasmic. The chain crosses the membrane as a helical span at residues 495–531 (SGENRIMMTKVYIFLIFMVLILPSLGLTSLDFFFRWL). The Extracellular portion of the chain corresponds to 532–553 (FDKTSSEASIRLECVFLPDQGA). The chain crosses the membrane as a helical span at residues 554 to 585 (FFVNYVIASAFIGNGMELLRLPGLILYTFRMV). The gating helix stretch occupies residues 554 to 585 (FFVNYVIASAFIGNGMELLRLPGLILYTFRMV). The Cytoplasmic segment spans residues 586 to 605 (MAKTAADRRNVKQHQAFEYE). Residues 606-623 (FGAMYAWMLCVFTVIMAY) traverse the membrane as a helical segment. The Extracellular segment spans residues 624–627 (SITC). Residues 628–650 (PIIVPFGLIYILLKHMVDRHNLY) traverse the membrane as a helical segment. Residues 651–660 (FAYLPAKLEK) are Cytoplasmic-facing. The chain crosses the membrane as a helical span at residues 661–688 (RIHFAAVNQALAAPILCLFWLYFFSFLR). Residues 689–693 (LGLKA) lie on the Extracellular side of the membrane. The chain crosses the membrane as a helical span at residues 694-708 (PLTLFTFLVLLLTIL). Topologically, residues 709–803 (VCLAYTCFGC…DSVAAADQED (95 aa)) are cytoplasmic.

Belongs to the CSC1 (TC 1.A.17) family. As to quaternary structure, (Microbial infection) Interacts with H.contortus GAL-1 (via domain galectin 1).

The protein resides in the lysosome membrane. Its subcellular location is the early endosome membrane. It localises to the cell membrane. The enzyme catalyses Ca(2+)(in) = Ca(2+)(out). In terms of biological role, mechanosensitive cation channel with low conductance and high activation threshold. In contrast to TMEM63B, does not show phospholipid scramblase activity. Acts as a regulator of lysosomal morphology by mediating lysosomal mechanosensitivity. Important for the baby's first breath and respiration throughout life. Upon lung inflation conducts cation currents in alveolar type 1 and 2 cells triggering lamellar body exocytosis and surfactant secretion into airspace. Also acts as an osmosensitive cation channel preferentially activated by hypotonic stress. Its function is as follows. (Microbial infection) Involved in the immunomodulatory effects exerted by H.contortus GAL-1 on host peripheral blood mononuclear cells to down-regulate host immune response. This chain is Mechanosensitive cation channel TMEM63A (TMEM63A), found in Capra hircus (Goat).